Reading from the N-terminus, the 140-residue chain is MNLEALCKEAGLSFYDDELVSENGRKIYRIYVQKEGGVNLDDCARLSEILSPIFDVESPVNGEYFLEVSSPGLERKLSKIEHFAKSIGELVKITTNEKEKFEAKIIAVDDENITLENLENKEKTTINFNDIKKARTFVEW.

This sequence belongs to the RimP family.

It localises to the cytoplasm. In terms of biological role, required for maturation of 30S ribosomal subunits. This chain is Ribosome maturation factor RimP, found in Campylobacter jejuni subsp. jejuni serotype O:2 (strain ATCC 700819 / NCTC 11168).